The sequence spans 156 residues: SCP2 sterol-binding domain-containing protein 1 (156 aa).

One can recognise an SCP2 domain in the interval 44 to 156 (TVPVFEDISQ…ERVFKDWAKW (113 aa)).

The protein is SCP2 sterol-binding domain-containing protein 1 (SCP2D1) of Bos taurus (Bovine).